A 367-amino-acid polypeptide reads, in one-letter code: Phosphoribosylaminoimidazole-succinocarboxamide synthase (367 aa).

Belongs to the SAICAR synthetase family.

The catalysed reaction is 5-amino-1-(5-phospho-D-ribosyl)imidazole-4-carboxylate + L-aspartate + ATP = (2S)-2-[5-amino-1-(5-phospho-beta-D-ribosyl)imidazole-4-carboxamido]succinate + ADP + phosphate + 2 H(+). It participates in purine metabolism; IMP biosynthesis via de novo pathway; 5-amino-1-(5-phospho-D-ribosyl)imidazole-4-carboxamide from 5-amino-1-(5-phospho-D-ribosyl)imidazole-4-carboxylate: step 1/2. In Shewanella baltica (strain OS195), this protein is Phosphoribosylaminoimidazole-succinocarboxamide synthase.